The primary structure comprises 144 residues: Large ribosomal subunit protein uL15 (144 aa).

The disordered stretch occupies residues 1 to 57 (MKLNDLSPAPGSRREKHRPGRGIGSGLGKTGGRGHKGQTSRSGGTIAPGFEGGQQPL). Positions 21-31 (RGIGSGLGKTG) are enriched in gly residues.

It belongs to the universal ribosomal protein uL15 family. In terms of assembly, part of the 50S ribosomal subunit.

In terms of biological role, binds to the 23S rRNA. The polypeptide is Large ribosomal subunit protein uL15 (Pseudomonas fluorescens (strain ATCC BAA-477 / NRRL B-23932 / Pf-5)).